The sequence spans 466 residues: MNRVSISDIYKDDIIVNSLITVCGWVRNRRSSKSGFSFITIYDGSCFNSIQVIANNTLPNYYKEILHLTTGCSVMLSGKLILSIGDKQKYEIQLKKIKVLGWVENPETYPISSKKHSTEYLREVAHLRSRTNLIGAIARIRNYILHSLHHFFYKEKYYWVPTPIITSLNTEGAGEMFRVSTLDMENIPKNLDSSVDFKKDFFGKESFLTVSGQLNLETYACSLSKVYTFGPTFRAENSNTGRHLAEFWMLEVESAFTDLNDISDFAECMLKYVCKSLLKKCITDINFLENYTNSNIVDRLEKFLLVDFVRIDYVEVINILLDSKIKFNNSVFLGIDLSSEHERFLVENYFKIPVIVKNYPKELKAFYMRLNNDKKTVAAIDILVPNVGELIGGSQREERIAILDERLLELGLKKEDYWWYRDLRRYGTVPHSGFGMGFERLISYFTGITNIRDLIPFPRTVNNAYF.

This sequence belongs to the class-II aminoacyl-tRNA synthetase family. As to quaternary structure, homodimer.

It is found in the cytoplasm. It catalyses the reaction tRNA(Asn) + L-asparagine + ATP = L-asparaginyl-tRNA(Asn) + AMP + diphosphate + H(+). This Buchnera aphidicola subsp. Acyrthosiphon pisum (strain APS) (Acyrthosiphon pisum symbiotic bacterium) protein is Asparagine--tRNA ligase.